Reading from the N-terminus, the 388-residue chain is Outer membrane protein assembly factor BamB (388 aa).

A signal peptide spans 1–17; sequence MVLSLLSVMLLSGYKFL.

This sequence belongs to the BamB family. Part of the Bam complex, which is composed of the outer membrane protein BamA, and four lipoproteins BamB, BamC, BamD and BamE.

It localises to the cell outer membrane. Functionally, part of the outer membrane protein assembly complex, which is involved in assembly and insertion of beta-barrel proteins into the outer membrane. The sequence is that of Outer membrane protein assembly factor BamB from Moranella endobia (strain PCIT).